Here is a 2603-residue protein sequence, read N- to C-terminus: Ankyrin repeat domain-containing protein 17 (2603 aa).

Residue Met-1 is modified to N-acetylmethionine. Composition is skewed to low complexity over residues 1–34 and 42–53; these read MEKA…AAAE and SSRARSASSPRG. The segment at 1–143 is disordered; it reads MEKATVPVAA…SFILDQDDLE (143 aa). Phosphoserine occurs at positions 19 and 50. Residues 63–79 show a composition bias toward basic residues; the sequence is KKKPPQQQHHKAKRNRT. Residues 84–94 show a composition bias toward low complexity; that stretch reads SSSESSSDSDN. Over residues 95-111 the composition is skewed to gly residues; the sequence is SGGGGGGGGGGGGGGGT. Residues 116-131 show a composition bias toward acidic residues; sequence SEEEEDDDDEEEEVSE. A Phosphoserine modification is found at Ser-156. ANK repeat units lie at residues 233-262, 266-295, 300-329, 333-362, 366-395, 400-429, 433-462, 466-495, 499-528, 533-562, 563-592, 596-625, 629-658, 663-692, and 696-725; these read SDNR…SVNE, EGES…NVED, GDIT…DVNA, TGNT…SIED, NGHT…GINT, FKES…DQEH, EMHT…QVNM, SFES…SLEE, EGYT…NINA, TQET…DIEL, GCST…NVHA, TGDT…DLEH, GGRT…NVNR, NDHT…DPTH, and DGST…NLLS. Residue Lys-318 forms a Glycyl lysine isopeptide (Lys-Gly) (interchain with G-Cter in SUMO2) linkage. Phosphoserine is present on Ser-803. ANK repeat units lie at residues 1082–1111, 1115–1144, 1149–1178, 1182–1211, 1217–1246, 1251–1280, 1284–1313, 1319–1348, 1352–1381, and 1385–1414; these read NHDT…SIEH, KGFT…DIEA, TKDT…NKEH, SDYT…EINS, LGIS…DINA, NRNT…NVEH, TGLT…DVNA, SRDT…HIDV, KGNT…DVDA, and RKIT…QFPS. Residues 1442 to 1526 are a coiled coil; that stretch reads VQAKDRQAAE…EKEKLKVEDE (85 aa). Ser-1457 bears the Phosphoserine mark. Disordered stretches follow at residues 1479 to 1500 and 1517 to 1717; these read AKRE…RKLE and EKEK…QKRE. Residues 1481–1491 are compositionally biased toward basic residues; the sequence is REKRKEKRRKK. 3 stretches are compositionally biased toward low complexity: residues 1531–1550, 1602–1611, and 1620–1632; these read TEPP…TWTT, ESKSSSTSES, and SSCS…SNSS. Residues Ser-1635 and Ser-1639 each carry the phosphoserine modification. Polar residues-rich tracts occupy residues 1642 to 1652 and 1675 to 1703; these read VVTTTVSSKKQ and LSET…SPNG. Ser-1696, Ser-1700, and Ser-1709 each carry phosphoserine. The KH domain occupies 1725–1789; it reads RRSKKVSVPS…ESTRQATQLI (65 aa). An Asymmetric dimethylarginine modification is found at Arg-1874. Disordered stretches follow at residues 1906–1995, 2011–2192, and 2273–2332; these read PRLP…PSVR, TTVT…HKNS, and VVSS…YGSV. 2 stretches are compositionally biased toward low complexity: residues 1950 to 1995 and 2011 to 2028; these read SNQN…PSVR and TTVT…TNAT. 6 positions are modified to phosphoserine: Ser-2042, Ser-2044, Ser-2045, Ser-2047, Ser-2059, and Ser-2067. Polar residues predominate over residues 2066 to 2078; the sequence is ASPNKVASSSEQE. Low complexity predominate over residues 2095–2106; it reads SSSSSGSSSAHS. Composition is skewed to polar residues over residues 2107-2127 and 2273-2303; these read NQQQ…QQSQ and VVSS…SDTS. Over residues 2308-2318 the composition is skewed to pro residues; sequence FRPPLQRPAPS. 2 positions are modified to phosphoserine: Ser-2373 and Ser-2401. The tract at residues 2381-2423 is disordered; sequence CSSASNDSSAQSVSSGVRAPSPAPSSVPLGSEKPSNVSQDRKV. The span at 2382-2411 shows a compositional bias: low complexity; that stretch reads SSASNDSSAQSVSSGVRAPSPAPSSVPLGS.

In terms of assembly, interacts (via N-terminus) with NOD2. Interacts with CDK2, MCM3, MCM5, MCM7, CDC6 and PCNA. Interacts with MAVS and IFIH1. Interacts (via the second ankyrin repeat cluster) with DDX58. As to quaternary structure, (Microbial infection) Interacts with enterovirus 71/EV71 capsid protein VP1. Post-translationally, phosphorylated by CDK2. Ubiquitously expressed.

Its subcellular location is the cytoplasm. It is found in the nucleus. Functionally, could play pivotal roles in cell cycle and DNA regulation. Involved in innate immune defense against viruse by positively regulating the viral dsRNA receptors DDX58 and IFIH1 signaling pathways. Involves in NOD2- and NOD1-mediated responses to bacteria suggesting a role in innate antibacterial immune pathways too. Target of enterovirus 71 which is the major etiological agent of HFMD (hand, foot and mouth disease). Could play a central role for the formation and/or maintenance of the blood vessels of the circulation system. The protein is Ankyrin repeat domain-containing protein 17 (ANKRD17) of Homo sapiens (Human).